We begin with the raw amino-acid sequence, 85 residues long: uncharacterized protein (85 aa).

This is an uncharacterized protein from Treponema pallidum (strain Nichols).